A 685-amino-acid chain; its full sequence is Probable transcriptional regulator SLK3 (685 aa).

2 disordered regions span residues 25–66 and 108–129; these read NLPG…ENSY and LQQQ…SQRL. Positions 39–56 are enriched in low complexity; the sequence is QHLPQQQQRQLLEQQAGQ. Positions 176–423 are dimerization; that stretch reads PAENCITYWR…EHKVGPLEGL (248 aa). Positions 185-199 match the Nuclear localization signal motif; that stretch reads RKFVAEYFSPRAKQR. The segment covering 447 to 459 has biased composition (polar residues); the sequence is GNSGAMSGPAQAQ. 3 disordered regions span residues 447 to 491, 512 to 591, and 611 to 658; these read GNSG…MNGS, NNQN…NTQE, and QQQA…NNLP. Low complexity predominate over residues 460–471; the sequence is MTLSSGTMSGST. A compositionally biased stretch (polar residues) spans 512–524; the sequence is NNQNSNTGNQEGF. Positions 525–543 are enriched in low complexity; it reads SSQNPTLNSNQSPSSSSQQ. Composition is skewed to polar residues over residues 544–588, 611–636, and 645–658; these read RENL…SHGN, QQQA…TSNI, and RINS…NNLP.

Belongs to the adn1/SEU family.

It is found in the nucleus. Probable transcription regulator that functions in the development of the carpel margin meristem similarly to SEUSS (SEU). In association with SEU, supports organ development from meristematic regions by facilitating auxin response and thus organ initiation, and by sustaining meristematic potential through the maintenance of PHABULOSA expression. This Arabidopsis thaliana (Mouse-ear cress) protein is Probable transcriptional regulator SLK3 (SLK3).